The chain runs to 606 residues: Endonuclease 8-like 3 (606 aa).

Val2 acts as the Schiff-base intermediate with DNA; via amino nitrogen in catalysis. Positions 31–51 (ALQGLGGPGSPPAAPGPMGTS) are disordered. DNA-binding residues include Asn194 and Arg273. The FPG-type zinc-finger motif lies at 249-283 (KVYKRPNCGQCCCKITVCRLGENNRMTYFCPHCQK). Residues 319–348 (SEEQWTCEVCTLINKLSSKTCDACLTSRPA) form a RanBP2-type zinc finger. Ser451 bears the Phosphoserine mark. Residues Cys508, His511, Cys534, Cys542, Cys555, His557, Cys580, and Cys588 each coordinate Zn(2+). 2 GRF-type zinc fingers span residues 508 to 551 (CSKH…ADLS) and 555 to 597 (CNHG…AQNG).

Belongs to the FPG family.

It localises to the nucleus. Its subcellular location is the chromosome. The enzyme catalyses 2'-deoxyribonucleotide-(2'-deoxyribose 5'-phosphate)-2'-deoxyribonucleotide-DNA = a 3'-end 2'-deoxyribonucleotide-(2,3-dehydro-2,3-deoxyribose 5'-phosphate)-DNA + a 5'-end 5'-phospho-2'-deoxyribonucleoside-DNA + H(+). In terms of biological role, DNA glycosylase which prefers single-stranded DNA (ssDNA), or partially ssDNA structures such as bubble and fork structures, to double-stranded DNA (dsDNA). Mediates interstrand cross-link repair in response to replication stress: acts by mediating DNA glycosylase activity, cleaving one of the two N-glycosyl bonds comprising the interstrand cross-link, which avoids the formation of a double-strand break but generates an abasic site that is bypassed by translesion synthesis polymerases. In vitro, displays strong glycosylase activity towards the hydantoin lesions spiroiminodihydantoin (Sp) and guanidinohydantoin (Gh) in both ssDNA and dsDNA; also recognizes FapyA, FapyG, 5-OHU, 5-OHC, 5-OHMH, Tg and 8-oxoA lesions in ssDNA. No activity on 8-oxoG detected. Also shows weak DNA-(apurinic or apyrimidinic site) lyase activity. In vivo, appears to be the primary enzyme involved in removing Sp and Gh from ssDNA in neonatal tissues. This chain is Endonuclease 8-like 3 (NEIL3), found in Bos taurus (Bovine).